Here is a 513-residue protein sequence, read N- to C-terminus: Cobyric acid synthase (513 aa).

A GATase cobBQ-type domain is found at 270–470; the sequence is RLRIAIVAYP…THGLFESPAV (201 aa). The active-site Nucleophile is Cys-351. Residue His-462 is part of the active site.

It belongs to the CobB/CobQ family. CobQ subfamily.

The protein operates within cofactor biosynthesis; adenosylcobalamin biosynthesis. Functionally, catalyzes amidations at positions B, D, E, and G on adenosylcobyrinic A,C-diamide. NH(2) groups are provided by glutamine, and one molecule of ATP is hydrogenolyzed for each amidation. The chain is Cobyric acid synthase from Leptothrix cholodnii (strain ATCC 51168 / LMG 8142 / SP-6) (Leptothrix discophora (strain SP-6)).